Consider the following 572-residue polypeptide: Probable terpene synthase 11 (572 aa).

Mg(2+) is bound by residues Asp-317, Asp-321, and Glu-469. The DDXXD motif motif lies at 317–321 (DDIFD).

It belongs to the terpene synthase family. It depends on Mg(2+) as a cofactor.

In terms of biological role, probable sesquiterpene synthase. The chain is Probable terpene synthase 11 (TPS11) from Ricinus communis (Castor bean).